Consider the following 213-residue polypeptide: 3-demethoxyubiquinol 3-hydroxylase (213 aa).

Fe cation contacts are provided by E62, E92, H95, E144, E176, and H179.

Belongs to the COQ7 family. The cofactor is Fe cation.

The protein resides in the cell membrane. It carries out the reaction a 5-methoxy-2-methyl-3-(all-trans-polyprenyl)benzene-1,4-diol + AH2 + O2 = a 3-demethylubiquinol + A + H2O. It participates in cofactor biosynthesis; ubiquinone biosynthesis. In terms of biological role, catalyzes the hydroxylation of 2-nonaprenyl-3-methyl-6-methoxy-1,4-benzoquinol during ubiquinone biosynthesis. The chain is 3-demethoxyubiquinol 3-hydroxylase from Chromohalobacter salexigens (strain ATCC BAA-138 / DSM 3043 / CIP 106854 / NCIMB 13768 / 1H11).